Reading from the N-terminus, the 418-residue chain is MFSKHDQLQGYDDELLAAMDAEDRRQEDHIELIASENYASKRVMQAQGGGLTNKYAEGYPGKRYYGGCEHVDKVERLAIDRARQLFGADYANVQPHSGSSANAAVYLALLNAGDTILGMSLAHGGHLTHGAKVSSSGKLYNAVQYGLDTATGLIDYDEVERLAVEHKPKMIVAGFSAYSKTLDFPRFRAIADKVGALLFVDMAHVAGLVAAGLYPNPIPFADVVTTTTHKTLRGPRGGLILARANEEIEKKLNSAVFPGAQGGPLMHVIAAKAVCFKEALEPGFKDYQAQVIRNAKAMAEVFIGRGYDVVSGGTDNHLMLISLVKQGLTGKAADAALGAAHITVNKNAVPNDPQSPFVTSGIRIGTPAVTTRGFREGECRELAGWICDILDDIDNPEVGERVRGQVGEFCRHFPVYAD.

Residues leucine 121 and 125-127 (GHL) contribute to the (6S)-5,6,7,8-tetrahydrofolate site. Lysine 230 is modified (N6-(pyridoxal phosphate)lysine). 355–357 (SPF) is a (6S)-5,6,7,8-tetrahydrofolate binding site.

This sequence belongs to the SHMT family. As to quaternary structure, homodimer. It depends on pyridoxal 5'-phosphate as a cofactor.

It localises to the cytoplasm. It carries out the reaction (6R)-5,10-methylene-5,6,7,8-tetrahydrofolate + glycine + H2O = (6S)-5,6,7,8-tetrahydrofolate + L-serine. It participates in one-carbon metabolism; tetrahydrofolate interconversion. Its pathway is amino-acid biosynthesis; glycine biosynthesis; glycine from L-serine: step 1/1. Catalyzes the reversible interconversion of serine and glycine with tetrahydrofolate (THF) serving as the one-carbon carrier. This reaction serves as the major source of one-carbon groups required for the biosynthesis of purines, thymidylate, methionine, and other important biomolecules. Also exhibits THF-independent aldolase activity toward beta-hydroxyamino acids, producing glycine and aldehydes, via a retro-aldol mechanism. The chain is Serine hydroxymethyltransferase 2 from Pseudomonas aeruginosa (strain ATCC 15692 / DSM 22644 / CIP 104116 / JCM 14847 / LMG 12228 / 1C / PRS 101 / PAO1).